The chain runs to 246 residues: 1-(5-phosphoribosyl)-5-[(5-phosphoribosylamino)methylideneamino] imidazole-4-carboxamide isomerase (246 aa).

Asp-7 functions as the Proton acceptor in the catalytic mechanism. Asp-130 acts as the Proton donor in catalysis.

The protein belongs to the HisA/HisF family.

It is found in the cytoplasm. The catalysed reaction is 1-(5-phospho-beta-D-ribosyl)-5-[(5-phospho-beta-D-ribosylamino)methylideneamino]imidazole-4-carboxamide = 5-[(5-phospho-1-deoxy-D-ribulos-1-ylimino)methylamino]-1-(5-phospho-beta-D-ribosyl)imidazole-4-carboxamide. Its pathway is amino-acid biosynthesis; L-histidine biosynthesis; L-histidine from 5-phospho-alpha-D-ribose 1-diphosphate: step 4/9. The protein is 1-(5-phosphoribosyl)-5-[(5-phosphoribosylamino)methylideneamino] imidazole-4-carboxamide isomerase of Sodalis glossinidius (strain morsitans).